We begin with the raw amino-acid sequence, 161 residues long: Efficient mitochondria targeting-associated protein 19 (161 aa).

At 1–10 (MKLGHREQQF) the chain is on the cytoplasmic side. The region spanning 7–159 (EQQFYLWYFI…PTFLIPLRLC (153 aa)) is the EXPERA domain. Residues 11–31 (YLWYFIVHIPITIFIDSSVVI) form a helical membrane-spanning segment. Residues 32-61 (PAKWQLGIAQKVVSDHIAKQHDFLLSEKPE) lie on the Lumenal side of the membrane. The chain crosses the membrane as a helical span at residues 62–82 (WLYWFVVLELVLQLPLFVYFV). Residues 83–101 (NKFWNSSELQVNTNSRLKK) are Cytoplasmic-facing. The helical transmembrane segment at 102–122 (WLRIYGWNASLTTLICIVVIF) threads the bilayer. Topologically, residues 123–141 (KRGYIPYDVLKTSLSMTQK) are lumenal. A helical transmembrane segment spans residues 142–160 (CQLASVYLPTFLIPLRLCF). Val161 is a topological domain (cytoplasmic).

This sequence belongs to the TMEM97/sigma-2 receptor family.

Its subcellular location is the endoplasmic reticulum membrane. Part of an import route for newly synthesized mitochondrial proteins termed the ER-SURF pathway (ER surface-mediated protein targeting), which retrieves mitochondrial precursor proteins from the ER surface and reroutes them to mitochondria for efficient mitochondrial import. Acts as a quality control factor in the ER, promoting the proteolytic degradation of nonproductive and extramitochondrial precursor proteins in the ER membrane thus removing them from the ER surface. The sequence is that of Efficient mitochondria targeting-associated protein 19 from Saccharomyces cerevisiae (strain ATCC 204508 / S288c) (Baker's yeast).